Consider the following 505-residue polypeptide: Aspartyl/glutamyl-tRNA(Asn/Gln) amidotransferase subunit B (505 aa).

Belongs to the GatB/GatE family. GatB subfamily. As to quaternary structure, heterotrimer of A, B and C subunits.

It carries out the reaction L-glutamyl-tRNA(Gln) + L-glutamine + ATP + H2O = L-glutaminyl-tRNA(Gln) + L-glutamate + ADP + phosphate + H(+). The catalysed reaction is L-aspartyl-tRNA(Asn) + L-glutamine + ATP + H2O = L-asparaginyl-tRNA(Asn) + L-glutamate + ADP + phosphate + 2 H(+). Allows the formation of correctly charged Asn-tRNA(Asn) or Gln-tRNA(Gln) through the transamidation of misacylated Asp-tRNA(Asn) or Glu-tRNA(Gln) in organisms which lack either or both of asparaginyl-tRNA or glutaminyl-tRNA synthetases. The reaction takes place in the presence of glutamine and ATP through an activated phospho-Asp-tRNA(Asn) or phospho-Glu-tRNA(Gln). The sequence is that of Aspartyl/glutamyl-tRNA(Asn/Gln) amidotransferase subunit B from Streptomyces avermitilis (strain ATCC 31267 / DSM 46492 / JCM 5070 / NBRC 14893 / NCIMB 12804 / NRRL 8165 / MA-4680).